A 237-amino-acid chain; its full sequence is 2,3-bisphosphoglycerate-dependent phosphoglycerate mutase (237 aa).

Residues 10–17, 23–24, Arg-62, 89–92, Lys-100, 116–117, and 185–186 each bind substrate; these read RHGESKWN, TG, ERHY, RR, and GN. The active-site Tele-phosphohistidine intermediate is His-11. Glu-89 acts as the Proton donor/acceptor in catalysis.

This sequence belongs to the phosphoglycerate mutase family. BPG-dependent PGAM subfamily. As to quaternary structure, homodimer.

The catalysed reaction is (2R)-2-phosphoglycerate = (2R)-3-phosphoglycerate. It functions in the pathway carbohydrate degradation; glycolysis; pyruvate from D-glyceraldehyde 3-phosphate: step 3/5. Its function is as follows. Catalyzes the interconversion of 2-phosphoglycerate and 3-phosphoglycerate. This is 2,3-bisphosphoglycerate-dependent phosphoglycerate mutase from Baumannia cicadellinicola subsp. Homalodisca coagulata.